Reading from the N-terminus, the 620-residue chain is Transcription factor kayak (620 aa).

2 disordered regions span residues 1–36 (MKVKVERTTITKKTTTTKPKPDEEDNNDDNSSSNGV) and 184–288 (SDTD…EKRR). Polar residues predominate over residues 184-194 (SDTDDSNASWN). Low complexity-rich tracts occupy residues 201–233 (GDTTDTSSGATDSTSYQNNSMLGNGSNGSGANN) and 249–266 (ANNNSNTNTSNSATPAAR). The region spanning 284 to 347 (EEKRRIRRER…NQLKYVIEAH (64 aa)) is the bZIP domain. Residues 286–305 (KRRIRRERNKAAAARCRKRR) form a basic motif region. The leucine-zipper stretch occupies residues 312–340 (LTEEVDALVKKGDTLKAEITTLTELRNQL). The interval 375–414 (STGGSSCGSVHSNHSHNNNNNNNNSNDSSSGTITGFDATL) is disordered. Residues 377–405 (GGSSCGSVHSNHSHNNNNNNNNSNDSSSG) show a composition bias toward low complexity. S422 bears the Phosphoserine mark. 2 disordered regions span residues 447–466 (GLDSESSSLDQDGPPPAKRA) and 590–620 (SGPLIPNCSSQNKHPLELPTPTTEPSKLCPL).

This sequence belongs to the bZIP family. Fos subfamily. Homodimer. Heterodimer with Jra. The kay-Jra heterodimer binds more stably to the AP-1 site than either of the two proteins alone.

It is found in the nucleus. Functionally, developmentally regulated transcription factor AP-1 binds and recognizes the enhancer DNA sequence: 5'-TGA[CG]TCA-3'. May play a role in the function or determination of a particular subset of cells in the developing embryo. It is able to carry out its function either independently of or in conjunction with Jra. The sequence is that of Transcription factor kayak from Drosophila willistoni (Fruit fly).